A 153-amino-acid chain; its full sequence is ATP synthase subunit b' (153 aa).

Residues 23–40 (LMAIQVVALTYILNSLFF) traverse the membrane as a helical segment.

Belongs to the ATPase B chain family. In terms of assembly, F-type ATPases have 2 components, F(1) - the catalytic core - and F(0) - the membrane proton channel. F(1) has five subunits: alpha(3), beta(3), gamma(1), delta(1), epsilon(1). F(0) has four main subunits: a(1), b(1), b'(1) and c(10-14). The alpha and beta chains form an alternating ring which encloses part of the gamma chain. F(1) is attached to F(0) by a central stalk formed by the gamma and epsilon chains, while a peripheral stalk is formed by the delta, b and b' chains.

The protein localises to the cellular thylakoid membrane. Its function is as follows. F(1)F(0) ATP synthase produces ATP from ADP in the presence of a proton or sodium gradient. F-type ATPases consist of two structural domains, F(1) containing the extramembraneous catalytic core and F(0) containing the membrane proton channel, linked together by a central stalk and a peripheral stalk. During catalysis, ATP synthesis in the catalytic domain of F(1) is coupled via a rotary mechanism of the central stalk subunits to proton translocation. Functionally, component of the F(0) channel, it forms part of the peripheral stalk, linking F(1) to F(0). The b'-subunit is a diverged and duplicated form of b found in plants and photosynthetic bacteria. The polypeptide is ATP synthase subunit b' (Prochlorococcus marinus (strain AS9601)).